Consider the following 622-residue polypeptide: Kinesin-like protein KIFC1 (622 aa).

The interval Met1–Asp88 is disordered. A compositionally biased stretch (polar residues) spans Ser32 to Thr41. The stretch at Asp95 to Phe264 forms a coiled coil. The 353-residue stretch at Asn260–Cys612 folds into the Kinesin motor domain. A disordered region spans residues Pro279 to Ser323. Thr309 is subject to Phosphothreonine. Position 360–367 (Gly360–Thr367) interacts with ATP.

This sequence belongs to the TRAFAC class myosin-kinesin ATPase superfamily. Kinesin family. NCD subfamily. In terms of assembly, binds NUBP1 and NUBP2. Interacts with PPP1R42.

It localises to the nucleus. The protein localises to the cytoplasm. The protein resides in the cytoskeleton. Its subcellular location is the microtubule organizing center. It is found in the centrosome. It localises to the spindle. The protein localises to the early endosome. Its function is as follows. Minus end-directed microtubule-dependent motor required for bipolar spindle formation. May contribute to movement of early endocytic vesicles. Regulates cilium formation and structure. In Cricetulus griseus (Chinese hamster), this protein is Kinesin-like protein KIFC1.